The following is a 518-amino-acid chain: Uronate isomerase (518 aa).

This sequence belongs to the metallo-dependent hydrolases superfamily. Uronate isomerase family.

The enzyme catalyses D-glucuronate = D-fructuronate. The catalysed reaction is aldehydo-D-galacturonate = keto-D-tagaturonate. Its pathway is carbohydrate metabolism; pentose and glucuronate interconversion. The chain is Uronate isomerase (uxaC) from Corynebacterium glutamicum (strain ATCC 13032 / DSM 20300 / JCM 1318 / BCRC 11384 / CCUG 27702 / LMG 3730 / NBRC 12168 / NCIMB 10025 / NRRL B-2784 / 534).